The following is a 122-amino-acid chain: MARIAGVNIPVNKRVEIALTYIYGICRDSAKRITKEAGIEPQVRVSDLTDAEVAQLRDIIDNNHTVEGDLRRQIAMNVKRLMDLGCYRGLRHRRGLPCRGQRTHTNARTRKGPRKPIAGKKK.

Positions 96 to 122 are disordered; that stretch reads LPCRGQRTHTNARTRKGPRKPIAGKKK.

The protein belongs to the universal ribosomal protein uS13 family. In terms of assembly, part of the 30S ribosomal subunit. Forms a loose heterodimer with protein S19. Forms two bridges to the 50S subunit in the 70S ribosome.

Functionally, located at the top of the head of the 30S subunit, it contacts several helices of the 16S rRNA. In the 70S ribosome it contacts the 23S rRNA (bridge B1a) and protein L5 of the 50S subunit (bridge B1b), connecting the 2 subunits; these bridges are implicated in subunit movement. Contacts the tRNAs in the A and P-sites. The chain is Small ribosomal subunit protein uS13 from Magnetococcus marinus (strain ATCC BAA-1437 / JCM 17883 / MC-1).